Consider the following 743-residue polypeptide: Isocitrate dehydrogenase [NADP] 2 (743 aa).

NADP(+) contacts are provided by Asn87 and Ser89. 5 residues coordinate D-threo-isocitrate: Ser134, Asn137, Arg141, Arg147, and Lys257. Asn137 contacts NADP(+). Asp352 serves as a coordination point for Mg(2+). Positions 422 and 549 each coordinate D-threo-isocitrate. Residues Asp550 and Asp554 each contribute to the Mg(2+) site. Residues Ser587, His591, Arg602, Asp604, and Arg651 each contribute to the NADP(+) site.

The protein belongs to the monomeric-type IDH family. Monomer. It depends on Mg(2+) as a cofactor. Mn(2+) serves as cofactor.

The enzyme catalyses D-threo-isocitrate + NADP(+) = 2-oxoglutarate + CO2 + NADPH. Its function is as follows. Catalyzes the oxidative decarboxylation of isocitrate to 2-oxoglutarate and carbon dioxide with the concomitant reduction of NADP(+). This Colwellia maris protein is Isocitrate dehydrogenase [NADP] 2 (icd2).